The sequence spans 585 residues: Parathyroid hormone/parathyroid hormone-related peptide receptor (585 aa).

The first 26 residues, 1 to 26 (MGAARIAPGLALLLCCPVLSSAYALV), serve as a signal peptide directing secretion. Residues 27 to 184 (DADDVMTKEE…REREVFDRLG (158 aa)) lie on the Extracellular side of the membrane. Cystine bridges form between Cys48-Cys113, Cys104-Cys144, and Cys127-Cys166. The disordered stretch occupies residues 66-100 (DKGWASAPTSGKPRKEKASGKLYPESGEDTGSRHQ). Asn147, Asn157, Asn162, and Asn172 each carry an N-linked (GlcNAc...) asparagine glycan. The chain crosses the membrane as a helical span at residues 185–208 (MIYTVGYSVSLASLTVAVLILAYF). Residues 209-215 (RRLHCTR) lie on the Cytoplasmic side of the membrane. Residues 216–235 (NYIHMHLFLSFMLRAVSIFV) traverse the membrane as a helical segment. Topologically, residues 236–277 (KDAVLYSGATLDEAERLTEEELRAIAQAPLPPVAATSYVGCR) are extracellular. Residues 278–301 (VAVTFFLYFLATNYYWILVEGLYL) form a helical membrane-spanning segment. Residues 302–315 (HSLIFMAFFSEKKY) lie on the Cytoplasmic side of the membrane. Residues 316–337 (LWGFTVFGWGLPAIFVAVWVSV) form a helical membrane-spanning segment. Residues 338–356 (RATLANTGCWDLSSGNKKW) are Extracellular-facing. Residues 357 to 377 (IIQVPILASIVLNFILFINIV) traverse the membrane as a helical segment. The Cytoplasmic portion of the chain corresponds to 378–404 (RVLATKLRETNAGRCDTRQQYRKLLKS). The chain crosses the membrane as a helical span at residues 405–423 (TLVLMPLFGVHYIVFMATP). The Extracellular segment spans residues 424 to 435 (YTEVSGTLWQVQ). A helical transmembrane segment spans residues 436–458 (MHYEMLFNSFQGFFVAIIYCFCN). The Cytoplasmic portion of the chain corresponds to 459 to 585 (GEVQAEIKKS…LLQEEWETVM (127 aa)). Residues 469-472 (WSRW) carry the Important for interaction with G proteins motif. Thr543 bears the Phosphothreonine mark.

Belongs to the G-protein coupled receptor 2 family. In terms of assembly, homodimer in the absence of bound ligand. Peptide hormone binding leads to dissociation of the homodimer. Post-translationally, N-glycosylated.

The protein localises to the cell membrane. In terms of biological role, G-protein-coupled receptor for parathyroid hormone (PTH) and for parathyroid hormone-related peptide (PTHLH). Ligand binding causes a conformation change that triggers signaling via guanine nucleotide-binding proteins (G proteins) and modulates the activity of downstream effectors, such as adenylate cyclase (cAMP). PTH1R is coupled to G(s) G alpha proteins and mediates activation of adenylate cyclase activity. PTHLH dissociates from PTH1R more rapidly than PTH; as consequence, the cAMP response induced by PTHLH decays faster than the response induced by PTH. This Sus scrofa (Pig) protein is Parathyroid hormone/parathyroid hormone-related peptide receptor (PTH1R).